A 437-amino-acid polypeptide reads, in one-letter code: ATP-dependent protease ATPase subunit HslU (437 aa).

ATP-binding positions include valine 18, 60–65 (GVGKTE), aspartate 250, glutamate 315, and arginine 387.

It belongs to the ClpX chaperone family. HslU subfamily. As to quaternary structure, a double ring-shaped homohexamer of HslV is capped on each side by a ring-shaped HslU homohexamer. The assembly of the HslU/HslV complex is dependent on binding of ATP.

The protein resides in the cytoplasm. In terms of biological role, ATPase subunit of a proteasome-like degradation complex; this subunit has chaperone activity. The binding of ATP and its subsequent hydrolysis by HslU are essential for unfolding of protein substrates subsequently hydrolyzed by HslV. HslU recognizes the N-terminal part of its protein substrates and unfolds these before they are guided to HslV for hydrolysis. This chain is ATP-dependent protease ATPase subunit HslU, found in Desulfovibrio desulfuricans (strain ATCC 27774 / DSM 6949 / MB).